The primary structure comprises 249 residues: Putative type I specificity subunit S.MpnORF615P (249 aa).

The protein belongs to the type-I restriction system S methylase family. In terms of assembly, the methyltransferase is composed of M and S polypeptides.

Its function is as follows. The specificity (S) subunit of a type I methyltransferase (MTase); this subunit dictates DNA sequence specificity. The single R subunit has multiple frameshifts and is probably not expressed. In Mycoplasma pneumoniae (strain ATCC 29342 / M129 / Subtype 1) (Mycoplasmoides pneumoniae), this protein is Putative type I specificity subunit S.MpnORF615P.